The following is a 43-amino-acid chain: Protein PsbN (43 aa).

The helical transmembrane segment at 5-27 (NLVAIFVSCLLVSLTGYALYTSF) threads the bilayer.

It belongs to the PsbN family.

The protein resides in the plastid. The protein localises to the chloroplast thylakoid membrane. May play a role in photosystem I and II biogenesis. This chain is Protein PsbN, found in Ephedra sinica (Chinese ephedra).